Consider the following 390-residue polypeptide: Phosphoprotein (390 aa).

Phosphothreonine occurs at positions 10 and 16. Polar residues predominate over residues 54-65 (QKNIQHPTASHQ). Disordered regions lie at residues 54–98 (QKNI…EPLF) and 144–183 (RTSTPVTEFKRGAGSRAQGQTIQEEGIDGNGASAGSKERS). Ser-69 carries the phosphoserine modification. A phosphothreonine mark is found at Thr-91, Thr-150, and Thr-164. At Ser-187 the chain carries Phosphoserine. Thr-249 carries the phosphothreonine modification. Ser-256 carries the post-translational modification Phosphoserine. Phosphothreonine is present on residues Thr-257 and Thr-281. Phosphoserine occurs at positions 291 and 293. The residue at position 297 (Thr-297) is a Phosphothreonine. Residues Ser-300 and Ser-373 each carry the phosphoserine modification. Positions 342 to 390 (AGRKVMITKMITDCVANPQMKQAFEQRLAKASTEDALNDIKKDIIRSAI) are interaction with the nucleoprotein. A Phosphothreonine modification is found at Thr-374.

It belongs to the rubulavirus/avulavirus P protein family. Homotetramer. Interacts (via multimerization domain) with polymerase L; this interaction forms the polymerase L-P complex. Interacts (via N-terminus) with N0 (via Ncore); this interaction allows P to chaperon N0 to avoid N polymerization before encapsidation. Interacts (via C-terminus) with N-RNA template; this interaction positions the polymerase on the template for both transcription and replication. Interacts with host RPS6KB1 kinase; this interaction may play a role in the viral replication and transcription.

Essential cofactor of the RNA polymerase L that plays a central role in the transcription and replication by forming the polymerase complex with RNA polymerase L and recruiting L to the genomic N-RNA template for RNA synthesis. Also plays a central role in the encapsidation of nascent RNA chains by forming the encapsidation complex with the nucleocapsid protein N (N-P complex). Acts as a chaperone for newly synthesized free N protein, so-called N0, allowing encapsidation of nascent RNA chains during replication. The nucleoprotein protein N prevents excessive phosphorylation of P, which leads to down-regulation of viral transcription/ replication. Participates, together with N, in the formation of viral factories (viroplasms), which are large inclusions in the host cytoplasm where replication takes place. In Homo sapiens (Human), this protein is Phosphoprotein (P/V).